A 386-amino-acid polypeptide reads, in one-letter code: O-methyltransferase 11 (386 aa).

Residues Ser-207, Gly-231, Asp-254, Asp-274, and Lys-288 each coordinate S-adenosyl-L-homocysteine. Asp-254 lines the S-adenosyl-L-methionine pocket. The active-site Proton acceptor is the His-292.

This sequence belongs to the class I-like SAM-binding methyltransferase superfamily. Cation-independent O-methyltransferase family. Homodimer.

It carries out the reaction dopamine + S-adenosyl-L-methionine = 4-methoxytyramine + S-adenosyl-L-homocysteine + H(+). The enzyme catalyses 3,4-dihydroxy-5-methoxyphenethylamine + S-adenosyl-L-methionine = 3-hydroxy-4,5-dimethoxyphenethylamine + S-adenosyl-L-homocysteine + H(+). It catalyses the reaction 3-hydroxy-4,5-dimethoxyphenethylamine + S-adenosyl-L-methionine = mescaline + S-adenosyl-L-homocysteine + H(+). The catalysed reaction is 4-hydroxy-3,5-dimethoxyphenethylamine + S-adenosyl-L-methionine = mescaline + S-adenosyl-L-homocysteine + H(+). It functions in the pathway aromatic compound metabolism. Its pathway is alkaloid biosynthesis. Functionally, O-methyltransferase participating in the biosynthesis of natural products derived from phenylethylamine, including mescaline, a natural hallucinogen potentially used in psychotherapeutic treatments. Catalyzes the O-methylation of mescaline para hydroxyl groups, using dopamine, 3,4-dihydroxy-5-methoxyphenethylamine, 3-hydroxy-4,5-dimethoxyphenethylamine and 4-hydroxy-3,5-dimethoxyphenethylamine as substrates. The polypeptide is O-methyltransferase 11 (Lophophora williamsii (Peyote)).